The following is a 104-amino-acid chain: Co-chaperonin GroES 2 (104 aa).

The protein belongs to the GroES chaperonin family. As to quaternary structure, heptamer of 7 subunits arranged in a ring. Interacts with the chaperonin GroEL.

The protein localises to the cytoplasm. Together with the chaperonin GroEL, plays an essential role in assisting protein folding. The GroEL-GroES system forms a nano-cage that allows encapsulation of the non-native substrate proteins and provides a physical environment optimized to promote and accelerate protein folding. GroES binds to the apical surface of the GroEL ring, thereby capping the opening of the GroEL channel. The protein is Co-chaperonin GroES 2 of Mesorhizobium japonicum (strain LMG 29417 / CECT 9101 / MAFF 303099) (Mesorhizobium loti (strain MAFF 303099)).